The following is a 210-amino-acid chain: Large ribosomal subunit protein uL4 (210 aa).

The tract at residues 57–78 is disordered; that stretch reads VSGGGAKPWKQKGTGRARAGSN.

Belongs to the universal ribosomal protein uL4 family. In terms of assembly, part of the 50S ribosomal subunit.

Its function is as follows. One of the primary rRNA binding proteins, this protein initially binds near the 5'-end of the 23S rRNA. It is important during the early stages of 50S assembly. It makes multiple contacts with different domains of the 23S rRNA in the assembled 50S subunit and ribosome. Functionally, forms part of the polypeptide exit tunnel. This chain is Large ribosomal subunit protein uL4, found in Desulfovibrio desulfuricans (strain ATCC 27774 / DSM 6949 / MB).